A 377-amino-acid chain; its full sequence is Succinyl-diaminopimelate desuccinylase (377 aa).

H66 serves as a coordination point for Zn(2+). D68 is an active-site residue. D99 provides a ligand contact to Zn(2+). E133 (proton acceptor) is an active-site residue. Zn(2+)-binding residues include E134, E162, and H348.

Belongs to the peptidase M20A family. DapE subfamily. As to quaternary structure, homodimer. Zn(2+) is required as a cofactor. Requires Co(2+) as cofactor.

The enzyme catalyses N-succinyl-(2S,6S)-2,6-diaminopimelate + H2O = (2S,6S)-2,6-diaminopimelate + succinate. It functions in the pathway amino-acid biosynthesis; L-lysine biosynthesis via DAP pathway; LL-2,6-diaminopimelate from (S)-tetrahydrodipicolinate (succinylase route): step 3/3. Its function is as follows. Catalyzes the hydrolysis of N-succinyl-L,L-diaminopimelic acid (SDAP), forming succinate and LL-2,6-diaminopimelate (DAP), an intermediate involved in the bacterial biosynthesis of lysine and meso-diaminopimelic acid, an essential component of bacterial cell walls. In Marinomonas sp. (strain MWYL1), this protein is Succinyl-diaminopimelate desuccinylase.